Reading from the N-terminus, the 189-residue chain is Protein Flattop (189 aa).

Positions 112 to 189 are disordered; that stretch reads EISGKPFDPD…PPPSPCKSTK (78 aa). Over residues 137-148 the composition is skewed to polar residues; it reads APNPTIIPSSPV. A compositionally biased stretch (pro residues) spans 178-189; the sequence is NNPPPSPCKSTK.

This sequence belongs to the Flattop family. As to quaternary structure, microtubule inner protein component of sperm flagellar doublet microtubules. Interacts with DLG3. In terms of tissue distribution, expressed in mono- and multiciliated tissues during planar cell polarity acquisition.

It localises to the cytoplasm. The protein resides in the cytoskeleton. The protein localises to the cilium basal body. Its subcellular location is the cilium axoneme. It is found in the flagellum axoneme. It localises to the apical cell membrane. In terms of biological role, microtubule inner protein (MIP) part of the dynein-decorated doublet microtubules (DMTs) in cilia axoneme. Acts as a regulator of cilium basal body docking and positioning in mono- and multiciliated cells. Regulates basal body docking and cilia formation in multiciliated lung cells. Regulates kinocilium positioning and stereocilia bundle morphogenesis in the inner ear. In Mus musculus (Mouse), this protein is Protein Flattop.